Reading from the N-terminus, the 358-residue chain is RuBisCO accumulation factor 1 (358 aa).

An N-terminal alpha-helix region spans residues 11-194 (VSAAEAAELI…RQAIEKLLTD (184 aa)). The C-terminal beta-sheet stretch occupies residues 218–344 (ARLIPVAGTF…VVLVLRPKKI (127 aa)).

This sequence belongs to the RAF family. As to quaternary structure, homodimer. Forms an RbcL(8)-Raf1(8) complex. Forms complexes of many stoichiometries with RbcL with and without RbcS. RbcX and Raf1 can bind simultaneously to RbcL. Interacts with both RuBisCO subunits (ccbL, ccbS), GroEL, DnaK and alpha and beta phycocyanin (cpcA, cpcB) in pull-down experiments with tagged protein. C-terminally tagged Raf1 does not interact with either RuBisCO subunit, suggesting its C-terminus is involved in binding.

It localises to the cytoplasm. Functionally, a major RuBisCO chaperone. Acts after GroEL-GroES chaperonin to fold and/or assemble the large subunit of RuBisCO (ccbL, rbcL). Cooperates with RbcX in RbcL folding, plays the major role in assembly of dimers into RbcL(8)-Raf1(8) intermediate complexes. RbcS replaces Raf1, leading to holoenzyme formation. In terms of biological role, required for optimal reconstitution of RbcL(8) upon expression in E.coli. Has been suggested to be involved in RuBisCO recycling and homeostasis rather than assembly. The protein is RuBisCO accumulation factor 1 of Synechocystis sp. (strain ATCC 27184 / PCC 6803 / Kazusa).